Reading from the N-terminus, the 248-residue chain is Probable phosphatase VFMJ11_A0091 (248 aa).

Zn(2+) is bound by residues H8, H10, H16, H41, E74, H102, H132, D194, and H196.

The protein belongs to the PHP family. Zn(2+) serves as cofactor.

This is Probable phosphatase VFMJ11_A0091 from Aliivibrio fischeri (strain MJ11) (Vibrio fischeri).